Here is a 279-residue protein sequence, read N- to C-terminus: Diaminopimelate epimerase (279 aa).

Residues N13 and N66 each contribute to the substrate site. The Proton donor role is filled by C75. Substrate contacts are provided by residues 76–77 (GN), N164, N197, and 215–216 (ER). C224 acts as the Proton acceptor in catalysis. 225 to 226 (GT) lines the substrate pocket.

This sequence belongs to the diaminopimelate epimerase family. Homodimer.

It localises to the cytoplasm. It carries out the reaction (2S,6S)-2,6-diaminopimelate = meso-2,6-diaminopimelate. It participates in amino-acid biosynthesis; L-lysine biosynthesis via DAP pathway; DL-2,6-diaminopimelate from LL-2,6-diaminopimelate: step 1/1. Functionally, catalyzes the stereoinversion of LL-2,6-diaminopimelate (L,L-DAP) to meso-diaminopimelate (meso-DAP), a precursor of L-lysine and an essential component of the bacterial peptidoglycan. The sequence is that of Diaminopimelate epimerase from Brachyspira hyodysenteriae (strain ATCC 49526 / WA1).